The following is a 283-amino-acid chain: MKLCGFDAGLDQPLFLIAGPCVIEGEQFAIDTAGQLKEMAGRLGLPFIYKSSYDKANRSSDQSFRGFGIDAGLTILDKVKKQVGVPVLTDVHTAEEAPLAASVVDVLQTPAFLCRQTDFIRAVAATGKPVNIKKGQFLAPGDMLNVVAKARHGAREAGFDGDTIMVCERGASFGYNNLVSDMRSLAIMRGTGCPVVYDATHSVQLPGGQGTSSGGQREFVPVLARAAVATGIAGIFMETHPDPCKALSDGPNAWPLPRLYDLLATLVELDRLVKSRPLAEQAL.

Belongs to the KdsA family.

It is found in the cytoplasm. The enzyme catalyses D-arabinose 5-phosphate + phosphoenolpyruvate + H2O = 3-deoxy-alpha-D-manno-2-octulosonate-8-phosphate + phosphate. Its pathway is carbohydrate biosynthesis; 3-deoxy-D-manno-octulosonate biosynthesis; 3-deoxy-D-manno-octulosonate from D-ribulose 5-phosphate: step 2/3. It functions in the pathway bacterial outer membrane biogenesis; lipopolysaccharide biosynthesis. This is 2-dehydro-3-deoxyphosphooctonate aldolase from Laribacter hongkongensis (strain HLHK9).